The primary structure comprises 457 residues: Serine--tRNA ligase (457 aa).

252–254 lines the L-serine pocket; sequence TAE. ATP is bound by residues 283 to 285 and V299; that span reads RKE. Residue E306 coordinates L-serine. Residue 370 to 373 participates in ATP binding; that stretch reads EMVS. Residue T406 participates in L-serine binding.

The protein belongs to the class-II aminoacyl-tRNA synthetase family. Type-1 seryl-tRNA synthetase subfamily. Homodimer. The tRNA molecule binds across the dimer.

It is found in the cytoplasm. The enzyme catalyses tRNA(Ser) + L-serine + ATP = L-seryl-tRNA(Ser) + AMP + diphosphate + H(+). The catalysed reaction is tRNA(Sec) + L-serine + ATP = L-seryl-tRNA(Sec) + AMP + diphosphate + H(+). Its pathway is aminoacyl-tRNA biosynthesis; selenocysteinyl-tRNA(Sec) biosynthesis; L-seryl-tRNA(Sec) from L-serine and tRNA(Sec): step 1/1. Its function is as follows. Catalyzes the attachment of serine to tRNA(Ser). Is also able to aminoacylate tRNA(Sec) with serine, to form the misacylated tRNA L-seryl-tRNA(Sec), which will be further converted into selenocysteinyl-tRNA(Sec). This Saccharolobus islandicus (strain Y.N.15.51 / Yellowstone #2) (Sulfolobus islandicus) protein is Serine--tRNA ligase.